Consider the following 1289-residue polypeptide: Trafficking protein particle complex II-specific subunit 120 (1289 aa).

Positions 354-365 (STGISPVDSNSK) are enriched in polar residues. The disordered stretch occupies residues 354–374 (STGISPVDSNSKATASTTASS). Phosphoserine occurs at positions 379 and 387.

It belongs to the TRS120 family. In terms of assembly, part of the multisubunit TRAPP (transport protein particle) II complex composed of BET3, BET5, TRS20, TRS23, TRS31, TRS33, TRS65, TRS120 and TRS130. Interacts directly with TRS65.

It is found in the golgi apparatus. It localises to the cis-Golgi network. Its function is as follows. Specific subunit of the TRAPP II complex, a highly conserved vesicle tethering complex that functions in the late Golgi as a guanine nucleotide exchanger (GEF) for the Golgi YPT1 GTPase. TRS120 plays a role in the YPT GEF activity of TRAPP II in concert with the two other TRAPP II-specific subunits TRS65 and TRS130. This is Trafficking protein particle complex II-specific subunit 120 (TRS120) from Saccharomyces cerevisiae (strain ATCC 204508 / S288c) (Baker's yeast).